The chain runs to 130 residues: Small ribosomal subunit protein uS8 (130 aa).

It belongs to the universal ribosomal protein uS8 family. Part of the 30S ribosomal subunit. Contacts proteins S5 and S12.

In terms of biological role, one of the primary rRNA binding proteins, it binds directly to 16S rRNA central domain where it helps coordinate assembly of the platform of the 30S subunit. The chain is Small ribosomal subunit protein uS8 from Buchnera aphidicola subsp. Cinara cedri (strain Cc).